A 240-amino-acid chain; its full sequence is Glutamine amidotransferase-like protein chry6 (240 aa).

In terms of domain architecture, Glutamine amidotransferase type-1 spans 13–205; it reads NFILDDTGGR…FVASDNPVLV (193 aa). Residue Cys102 is the Nucleophile of the active site. Catalysis depends on residues His185 and Glu187.

Belongs to the peptidase C26 family.

The protein operates within pigment biosynthesis. Glutamine amidotransferase-like protein; part of the gene cluster that mediates the biosynthesis of the yellow pigment chrysogine. Pyruvic acid and anthranilic acid are likely substrates for the nonribosomal peptide synthetase chry1/NRPS14, with pyruvic acid adenylated by the first A domain and anthranilic acid by the second. If pyruvic acid and anthranilic acid are merged and released from chry1/NRPS14 by hydrolysis, a subsequent amidation would lead to 2-pyruvoylaminobenzamide. This process is probably catalyzed by the amidotransferase chry2 using glutamine as amino donor. The dehydrogenase chry5 that has a terminal berberine bridge domain for C-N cyclization could catalyze the cyclization of 2-pyruvoylaminobenzamide to yield acetyl-4(3H)-quinazolidinone. A final reduction of acetyl-4(3H)-quinazolidinone catalyzed by the oxidoreductase chry4 would result in chrysogine. In Gibberella zeae (strain ATCC MYA-4620 / CBS 123657 / FGSC 9075 / NRRL 31084 / PH-1) (Wheat head blight fungus), this protein is Glutamine amidotransferase-like protein chry6.